Consider the following 504-residue polypeptide: Maturase K (504 aa).

The protein belongs to the intron maturase 2 family. MatK subfamily.

The protein resides in the plastid. Its subcellular location is the chloroplast. Its function is as follows. Usually encoded in the trnK tRNA gene intron. Probably assists in splicing its own and other chloroplast group II introns. This is Maturase K from Olimarabidopsis pumila (Dwarf rocket).